Reading from the N-terminus, the 311-residue chain is Nudix hydrolase 9 (311 aa).

Positions 131 to 298 (SSPLGNGAVI…GFALYELMLQ (168 aa)) constitute a Nudix hydrolase domain. Residues 192 to 213 (LNKKVTQEMFDSIICEVVEETG) carry the Nudix box motif. Positions 207 and 211 each coordinate Mg(2+).

Belongs to the Nudix hydrolase family. It depends on Mg(2+) as a cofactor. The cofactor is Mn(2+). In terms of tissue distribution, expressed in roots, stems and leaves.

Probably mediates the hydrolysis of some nucleoside diphosphate derivatives. This Arabidopsis thaliana (Mouse-ear cress) protein is Nudix hydrolase 9 (NUDT9).